The sequence spans 565 residues: Oxygen-dependent choline dehydrogenase (565 aa).

An FAD-binding site is contributed by 6 to 35 (DYIIVGAGSAGNTLATRLTEDAGVTVLLLE). His-475 acts as the Proton acceptor in catalysis.

This sequence belongs to the GMC oxidoreductase family. It depends on FAD as a cofactor.

The enzyme catalyses choline + A = betaine aldehyde + AH2. It carries out the reaction betaine aldehyde + NAD(+) + H2O = glycine betaine + NADH + 2 H(+). It functions in the pathway amine and polyamine biosynthesis; betaine biosynthesis via choline pathway; betaine aldehyde from choline (cytochrome c reductase route): step 1/1. Functionally, involved in the biosynthesis of the osmoprotectant glycine betaine. Catalyzes the oxidation of choline to betaine aldehyde and betaine aldehyde to glycine betaine at the same rate. This is Oxygen-dependent choline dehydrogenase from Pseudomonas putida (strain GB-1).